The sequence spans 359 residues: Splicing factor 3B subunit 4 (359 aa).

RRM domains are found at residues A13–K91 and A98–K176. Disordered regions lie at residues G198 to T239 and Q293 to P337. Composition is skewed to low complexity over residues Q202 to Q231 and Q293 to Q302. Residues H303–P312 are compositionally biased toward basic residues.

The protein belongs to the SF3B4 family. In terms of assembly, component of splicing factor SF3B which is composed of at least eight subunits.

The protein resides in the nucleus. In terms of biological role, subunit of the splicing factor SF3B required for 'A' complex assembly formed by the stable binding of U2 snRNP to the branchpoint sequence (BPS) in pre-mRNA. Sequence independent binding of SF3A/SF3B complex upstream of the branch site is essential, it may anchor U2 snRNP to the pre-mRNA. May also be involved in the assembly of the 'E' complex. Has been found in complex 'B' and 'C' as well. In Dictyostelium discoideum (Social amoeba), this protein is Splicing factor 3B subunit 4 (sf3b4).